A 425-amino-acid polypeptide reads, in one-letter code: MMSKRCLKRNQTLIPELLKNHGALLYGDTSVVDLSTAENQLLMEELLPEFQAAFDANTWSSQELAYSEGVGGCPKVRGLIADLVNSHFQPHAQVDKSHIVLGAGGCFALNALIEAICDPGDGILIAAPYWPGLDLSISVHNDAKAVVVRVPHEDFFRVESIRHYSKALLSAPNLVKAMIICNPHNPLGRNYPRETLQAIVDFCAERQIHLISDEVYALSQHVQPTSENPSAGFVSALSLDASHARGLVHVVYSLSKDFGCNGIRLGAFISQDNKAVVMSGALSTHCQTSTMATLVAQKIILTDENIQFVNTYGRGLLKSAYTVMEEFLNQHRIEFVSAECGMYIFAKLCGDRTSVDDEWLFQAILRRNGLVLSAGTDYHCKTPGWFRICYGCDREKLRHGLDRLRDCLQEFGETEFKFPFNDACF.

An N6-(pyridoxal phosphate)lysine modification is found at lysine 256.

It belongs to the class-I pyridoxal-phosphate-dependent aminotransferase family. The cofactor is pyridoxal 5'-phosphate.

Its pathway is secondary metabolite biosynthesis. Probable aminotransferase; part of the gene cluster that mediates the biosynthesis of an unusual class of epipolythiodioxopiperazines (ETPs) lacking the reactive thiol group important for toxicity. Firstly, L-tyrosine is prenylated by tcpD, before undergoing condensation with L-glycine in a reaction catalyzed by the NRPS tcpP leading to the diketopiperazine (DKP) backbone. Afterwards the alpha-carbon of tyrosine is oxidized by the cytochrome P450 tcpC to form a hydroxyl group. However, in contrast other ETP biosynthesis pathways studied so far, tcpC is not able to bishydroxylate the DKP at both alpha-carbon positions, but hydroxylates the alpha-carbon of the tyrosine part and the nitrogen of the glycine part. The next steps involve an alpha,beta-elimination reaction catalyzed by tcpI, a methylation by the methyltransferase tcpN the action of the four enzyme cascade tcpG/K/J/I. Due to a dysfunctional cytochrome P450 monooxygenase tcpC, the pathway leads to the biosynthesis of probable non-toxic metabolites lacking the reactive thiol group. The polypeptide is Probable aminotransferase tcpI (Claviceps purpurea (strain 20.1) (Ergot fungus)).